Consider the following 179-residue polypeptide: Large ribosomal subunit protein uL10 (179 aa).

It belongs to the universal ribosomal protein uL10 family. Part of the ribosomal stalk of the 50S ribosomal subunit. The N-terminus interacts with L11 and the large rRNA to form the base of the stalk. The C-terminus forms an elongated spine to which L12 dimers bind in a sequential fashion forming a multimeric L10(L12)X complex.

In terms of biological role, forms part of the ribosomal stalk, playing a central role in the interaction of the ribosome with GTP-bound translation factors. The sequence is that of Large ribosomal subunit protein uL10 from Thermotoga petrophila (strain ATCC BAA-488 / DSM 13995 / JCM 10881 / RKU-1).